Reading from the N-terminus, the 208-residue chain is Ribosomal RNA large subunit methyltransferase E (208 aa).

G63, W65, D83, D99, and D124 together coordinate S-adenosyl-L-methionine. The active-site Proton acceptor is the K164.

The protein belongs to the class I-like SAM-binding methyltransferase superfamily. RNA methyltransferase RlmE family.

The protein localises to the cytoplasm. It catalyses the reaction uridine(2552) in 23S rRNA + S-adenosyl-L-methionine = 2'-O-methyluridine(2552) in 23S rRNA + S-adenosyl-L-homocysteine + H(+). Functionally, specifically methylates the uridine in position 2552 of 23S rRNA at the 2'-O position of the ribose in the fully assembled 50S ribosomal subunit. This is Ribosomal RNA large subunit methyltransferase E from Salmonella choleraesuis (strain SC-B67).